The chain runs to 169 residues: NADH-quinone oxidoreductase subunit B (169 aa).

The [4Fe-4S] cluster site is built by C42, C43, C107, and C136.

It belongs to the complex I 20 kDa subunit family. NDH-1 is composed of 14 different subunits. Subunits NuoB, C, D, E, F, and G constitute the peripheral sector of the complex. [4Fe-4S] cluster serves as cofactor.

Its subcellular location is the cell inner membrane. It catalyses the reaction a quinone + NADH + 5 H(+)(in) = a quinol + NAD(+) + 4 H(+)(out). Functionally, NDH-1 shuttles electrons from NADH, via FMN and iron-sulfur (Fe-S) centers, to quinones in the respiratory chain. The immediate electron acceptor for the enzyme in this species is believed to be ubiquinone. Couples the redox reaction to proton translocation (for every two electrons transferred, four hydrogen ions are translocated across the cytoplasmic membrane), and thus conserves the redox energy in a proton gradient. The protein is NADH-quinone oxidoreductase subunit B of Helicobacter hepaticus (strain ATCC 51449 / 3B1).